Reading from the N-terminus, the 339-residue chain is DNA-directed RNA polymerase subunit alpha (339 aa).

Positions 1–233 (MVREKVRIST…DLFIPFLHAE (233 aa)) are alpha N-terminal domain (alpha-NTD). The segment at 267–339 (IALKSIFIDQ…FTINLPKNKF (73 aa)) is alpha C-terminal domain (alpha-CTD).

Belongs to the RNA polymerase alpha chain family. In plastids the minimal PEP RNA polymerase catalytic core is composed of four subunits: alpha, beta, beta', and beta''. When a (nuclear-encoded) sigma factor is associated with the core the holoenzyme is formed, which can initiate transcription.

The protein resides in the plastid. It localises to the chloroplast. The catalysed reaction is RNA(n) + a ribonucleoside 5'-triphosphate = RNA(n+1) + diphosphate. DNA-dependent RNA polymerase catalyzes the transcription of DNA into RNA using the four ribonucleoside triphosphates as substrates. This chain is DNA-directed RNA polymerase subunit alpha, found in Populus trichocarpa (Western balsam poplar).